A 257-amino-acid chain; its full sequence is NAD-dependent protein deacylase (257 aa).

The Deacetylase sirtuin-type domain occupies Met1–Glu252. Gly20–Trp39 contributes to the NAD(+) binding site. Positions 64 and 67 each coordinate substrate. Gln98–Asp101 contacts NAD(+). Residue His116 is the Proton acceptor of the active site. Residues Cys124, Cys127, Cys151, and Cys154 each coordinate Zn(2+). Residues Gly191 to Ser193, Asn217 to Glu219, and Ala235 contribute to the NAD(+) site.

This sequence belongs to the sirtuin family. Class III subfamily. It depends on Zn(2+) as a cofactor.

The protein localises to the cytoplasm. It carries out the reaction N(6)-acetyl-L-lysyl-[protein] + NAD(+) + H2O = 2''-O-acetyl-ADP-D-ribose + nicotinamide + L-lysyl-[protein]. It catalyses the reaction N(6)-succinyl-L-lysyl-[protein] + NAD(+) + H2O = 2''-O-succinyl-ADP-D-ribose + nicotinamide + L-lysyl-[protein]. NAD-dependent lysine deacetylase and desuccinylase that specifically removes acetyl and succinyl groups on target proteins. Modulates the activities of several proteins which are inactive in their acylated form. Deacetylates the N-terminal lysine residue of Alba, the major archaeal chromatin protein and that, in turn, increases Alba's DNA binding affinity, thereby repressing transcription. The polypeptide is NAD-dependent protein deacylase (Thermococcus kodakarensis (strain ATCC BAA-918 / JCM 12380 / KOD1) (Pyrococcus kodakaraensis (strain KOD1))).